The sequence spans 267 residues: Tryptophan synthase alpha chain (267 aa).

Catalysis depends on proton acceptor residues Glu-47 and Asp-58.

This sequence belongs to the TrpA family. Tetramer of two alpha and two beta chains.

The enzyme catalyses (1S,2R)-1-C-(indol-3-yl)glycerol 3-phosphate + L-serine = D-glyceraldehyde 3-phosphate + L-tryptophan + H2O. It participates in amino-acid biosynthesis; L-tryptophan biosynthesis; L-tryptophan from chorismate: step 5/5. Its function is as follows. The alpha subunit is responsible for the aldol cleavage of indoleglycerol phosphate to indole and glyceraldehyde 3-phosphate. This chain is Tryptophan synthase alpha chain, found in Chlorobium limicola (strain DSM 245 / NBRC 103803 / 6330).